A 216-amino-acid polypeptide reads, in one-letter code: Octanoyltransferase (216 aa).

Residues Glu-32–His-207 form the BPL/LPL catalytic domain. Substrate-binding positions include Arg-71–His-78, Ser-138–Gly-140, and Gly-151–Ala-153. The active-site Acyl-thioester intermediate is Cys-169.

It belongs to the LipB family.

The protein resides in the cytoplasm. It carries out the reaction octanoyl-[ACP] + L-lysyl-[protein] = N(6)-octanoyl-L-lysyl-[protein] + holo-[ACP] + H(+). It participates in protein modification; protein lipoylation via endogenous pathway; protein N(6)-(lipoyl)lysine from octanoyl-[acyl-carrier-protein]: step 1/2. Functionally, catalyzes the transfer of endogenously produced octanoic acid from octanoyl-acyl-carrier-protein onto the lipoyl domains of lipoate-dependent enzymes. Lipoyl-ACP can also act as a substrate although octanoyl-ACP is likely to be the physiological substrate. The protein is Octanoyltransferase of Shewanella amazonensis (strain ATCC BAA-1098 / SB2B).